The primary structure comprises 604 residues: UvrABC system protein C (604 aa).

The GIY-YIG domain occupies 13–92 (ASPGVYLMKD…IKKYHPKYNV (80 aa)). One can recognise a UVR domain in the interval 205–240 (SEIVQDLEKSIEKASKEQKFEQAGMYYRTLKLIQQA).

This sequence belongs to the UvrC family. In terms of assembly, interacts with UvrB in an incision complex.

The protein resides in the cytoplasm. The UvrABC repair system catalyzes the recognition and processing of DNA lesions. UvrC both incises the 5' and 3' sides of the lesion. The N-terminal half is responsible for the 3' incision and the C-terminal half is responsible for the 5' incision. The protein is UvrABC system protein C of Chlamydia abortus (strain DSM 27085 / S26/3) (Chlamydophila abortus).